The following is an 876-amino-acid chain: Vacuolar protein sorting-associated protein 39 homolog (876 aa).

Residues Gly14 to Thr310 enclose the CNH domain. A CHCR repeat occupies Glu578–Tyr741.

Belongs to the VAM6/VPS39 family. In terms of assembly, part of the homotypic fusion and vacuole protein sorting (HOPS) complex, composed of Vps16A, car/Vps33A, dor/Vps18, Vps39, Vps11 and lt/Vps41. Interacts with Rab2 (GTP-bound form); the interaction is probably direct.

The protein resides in the cytoplasm. Its subcellular location is the lysosome membrane. It localises to the late endosome membrane. The protein localises to the late endosome. It is found in the lysosome. In terms of biological role, part of the homotypic fusion and vacuole protein sorting (HOPS) tethering complex involved in endo-lysosomal vesicle trafficking and lysosome biogenesis. The HOPS complex facilitates docking and fusion of lysosomes with late endosomes and several other types of vesicles. The HOPS complex is also involved in autophagy and crinophagy (the elimination of unused secretory granules through their fusion with lysosomes). The HOPS complex mediates autophagocitic flux, probably by binding autophagosome-associated Syx17/syntaxin 17, promoting assembly of the trans-SNARE complex and instigating autophagosome-lysosome fusion. Independent of Syx17/syntaxin 17, HOPS is involved in biosynthetic transport to lysosomes and lysosome-related organelles such as eye-pigment granules. Required for autophagocytosis-dependent remodeling of myofibrils and transverse-tubules (T-tubules) during metamorphosis. The protein is Vacuolar protein sorting-associated protein 39 homolog of Drosophila melanogaster (Fruit fly).